A 703-amino-acid polypeptide reads, in one-letter code: DnaJ homolog subfamily C member 14 (703 aa).

2 disordered regions span residues 1-150 (MAQK…DGSS) and 164-229 (EDEE…RKRS). Residues 17-28 (SGGSSLITSGSS) are compositionally biased toward low complexity. A compositionally biased stretch (pro residues) spans 75–84 (HGPPRGPGPP). Acidic residues-rich tracts occupy residues 89-102 (YPDE…ESGV) and 164-176 (EDEE…DDEE). Basic residues predominate over residues 193-202 (PPSRRQRHRF). Positions 203–218 (LTKEDVRDSGRRDPKA) are enriched in basic and acidic residues. The span at 219-228 (PGRHRLARKR) shows a compositional bias: basic residues. 3 helical membrane-spanning segments follow: residues 254-274 (WWLI…GYLI), 305-325 (VMFQ…IRLL), and 327-347 (VVGA…QLGW). One can recognise a J domain in the interval 444–508 (NPFHVLGVEA…ERRKEYEMKR (65 aa)). Disordered regions lie at residues 622–643 (FGSR…PPAD) and 659–703 (MSNG…PFQR). Residues 673–684 (GTTSTSRPNSSV) are compositionally biased toward polar residues. The span at 691-703 (PKRRKKVRRPFQR) shows a compositional bias: basic residues.

In terms of assembly, interacts with the FxxxFxxxF motif of DRD1 via its C-terminal domain. In terms of tissue distribution, detected in heart, brain, lung, liver, skeletal muscle, kidney and testis.

The protein localises to the endoplasmic reticulum membrane. Its function is as follows. Regulates the export of target proteins, such as DRD1, from the endoplasmic reticulum to the cell surface. The polypeptide is DnaJ homolog subfamily C member 14 (Dnajc14) (Rattus norvegicus (Rat)).